Here is a 346-residue protein sequence, read N- to C-terminus: 2,5-dichlorohydroquinone reductive dechlorinase (346 aa).

A GST N-terminal domain is found at 43 to 154 (PRFELFHFVF…YLCDALSGGT (112 aa)). In terms of domain architecture, GST C-terminal spans 189–335 (DRRPESMQAV…AIIQWPGHPP (147 aa)).

The protein belongs to the GST superfamily.

The enzyme catalyses 2,5-dichlorohydroquinone + 2 glutathione = chlorohydroquinone + glutathione disulfide + chloride + H(+). It carries out the reaction chlorohydroquinone + 2 glutathione = hydroquinone + glutathione disulfide + chloride + H(+). It functions in the pathway xenobiotic degradation; gamma-hexachlorocyclohexane degradation. Functionally, catalyzes the degradation of 2,5-dichlorohydroquinone (2,5-DCHQ) into hydroquinone (HQ) via chlorohydroquinone (CHQ). In Sphingobium indicum (strain DSM 16412 / CCM 7286 / MTCC 6364 / B90A), this protein is 2,5-dichlorohydroquinone reductive dechlorinase.